We begin with the raw amino-acid sequence, 582 residues long: ATP-dependent lipid A-core flippase (582 aa).

The next 5 helical transmembrane spans lie at 16 to 36 (LWPT…ALIL), 64 to 84 (LMWM…TSYI), 153 to 173 (IIGL…ILIV), 253 to 273 (PIIQ…ASFP), and 275 to 295 (VMDS…IALM). The ABC transmembrane type-1 domain occupies 28–310 (IVAGVALILN…LTNVNAQFQR (283 aa)). Positions 342-578 (VEFRNVTFTY…RGVYAQLHKM (237 aa)) constitute an ABC transporter domain. 376 to 383 (GRSGSGKS) is a binding site for ATP.

This sequence belongs to the ABC transporter superfamily. Lipid exporter (TC 3.A.1.106) family. In terms of assembly, homodimer.

The protein localises to the cell inner membrane. It carries out the reaction ATP + H2O + lipid A-core oligosaccharideSide 1 = ADP + phosphate + lipid A-core oligosaccharideSide 2.. Functionally, involved in lipopolysaccharide (LPS) biosynthesis. Translocates lipid A-core from the inner to the outer leaflet of the inner membrane. Transmembrane domains (TMD) form a pore in the inner membrane and the ATP-binding domain (NBD) is responsible for energy generation. The chain is ATP-dependent lipid A-core flippase from Escherichia coli O6:K15:H31 (strain 536 / UPEC).